The sequence spans 437 residues: D-aminoacyl-tRNA deacylase (437 aa).

This sequence belongs to the DtdA deacylase family. As to quaternary structure, monomer. Zn(2+) is required as a cofactor.

The enzyme catalyses a D-aminoacyl-tRNA + H2O = a tRNA + a D-alpha-amino acid + H(+). It catalyses the reaction glycyl-tRNA(Ala) + H2O = tRNA(Ala) + glycine + H(+). In terms of biological role, D-aminoacyl-tRNA deacylase with broad substrate specificity. By recycling D-aminoacyl-tRNA to D-amino acids and free tRNA molecules, this enzyme counteracts the toxicity associated with the formation of D-aminoacyl-tRNA entities in vivo. The polypeptide is D-aminoacyl-tRNA deacylase (Methanoculleus marisnigri (strain ATCC 35101 / DSM 1498 / JR1)).